We begin with the raw amino-acid sequence, 545 residues long: Methionine--tRNA ligase (545 aa).

Residues 13-23 (PYANGEIHLGH) carry the 'HIGH' region motif. The Zn(2+) site is built by Cys-144, Cys-147, Cys-157, and Cys-160. The 'KMSKS' region motif lies at 329–333 (KMSKS). Lys-332 provides a ligand contact to ATP.

Belongs to the class-I aminoacyl-tRNA synthetase family. MetG type 1 subfamily. In terms of assembly, monomer. The cofactor is Zn(2+).

The protein localises to the cytoplasm. It carries out the reaction tRNA(Met) + L-methionine + ATP = L-methionyl-tRNA(Met) + AMP + diphosphate. In terms of biological role, is required not only for elongation of protein synthesis but also for the initiation of all mRNA translation through initiator tRNA(fMet) aminoacylation. The protein is Methionine--tRNA ligase of Vesicomyosocius okutanii subsp. Calyptogena okutanii (strain HA).